The primary structure comprises 136 residues: Methylglyoxal synthase (136 aa).

The 136-residue stretch at 1 to 136 (MKIALIAHDR…REVVREENEA (136 aa)) folds into the MGS-like domain. Substrate contacts are provided by residues histidine 8, lysine 12, 34–37 (TGTT), and 54–55 (SG). Aspartate 60 serves as the catalytic Proton donor/acceptor. Histidine 87 provides a ligand contact to substrate.

This sequence belongs to the methylglyoxal synthase family.

The catalysed reaction is dihydroxyacetone phosphate = methylglyoxal + phosphate. In terms of biological role, catalyzes the formation of methylglyoxal from dihydroxyacetone phosphate. This is Methylglyoxal synthase from Brevibacillus brevis (strain 47 / JCM 6285 / NBRC 100599).